A 370-amino-acid chain; its full sequence is N-acyl-L-amino acid amidohydrolase (370 aa).

This sequence belongs to the peptidase M20 family. Homotetramer. It depends on Co(2+) as a cofactor.

The enzyme catalyses an N-acyl-L-amino acid + H2O = an L-alpha-amino acid + a carboxylate. The catalysed reaction is an N-acetyl-L-cysteine-S-conjugate + H2O = an S-substituted L-cysteine + acetate. Hydrolyzes most efficiently N-acetyl derivatives of aromatic amino acids but is also active on other amino acids. L-stereospecific. The polypeptide is N-acyl-L-amino acid amidohydrolase (amaA) (Geobacillus stearothermophilus (Bacillus stearothermophilus)).